The chain runs to 346 residues: MLHSNIYNLQAEATNKILSSSSLEELESIKLYYFGKSGTITACLKSIATISNIEERKSVGSSVNAICAELKSLINSQKEKLHKIQINAQLMQDRVDISLPVRPKQIAKLHPISKTLHEVRHIFSSLGFKLSDGPELEDEFHVFDALNTHKNHPAREENDTFYLKTLVNQKRVVLRTHTSSVQIRVMQANKGNYPIKIIAPGKVYRNDWDATHSPMFHQIEGLYIDKNVNMGHLKYCIHYFLKKFFGENIQIRFRNSYFPFTEPSAEVDIKCGEKDWIEILGCGMVHRNVLTNVNIDPDQYSGFAFGIGIERVAMLKYNISDLRKFYSNKLQWLNHYGFCFTHLVSC.

Glu-262 provides a ligand contact to Mg(2+).

The protein belongs to the class-II aminoacyl-tRNA synthetase family. Phe-tRNA synthetase alpha subunit type 1 subfamily. Tetramer of two alpha and two beta subunits. Requires Mg(2+) as cofactor.

It localises to the cytoplasm. The catalysed reaction is tRNA(Phe) + L-phenylalanine + ATP = L-phenylalanyl-tRNA(Phe) + AMP + diphosphate + H(+). This is Phenylalanine--tRNA ligase alpha subunit from Ehrlichia chaffeensis (strain ATCC CRL-10679 / Arkansas).